The chain runs to 289 residues: ATP synthase subunit a (289 aa).

The next 6 membrane-spanning stretches (helical) occupy residues 43-63 (AFHL…LLIF), 104-124 (IAPL…VDLI), 160-180 (FCVF…GGFI), 193-213 (IFVQ…TLIA), 232-252 (VFIL…GLGV), and 259-279 (AVFH…LTIV).

It belongs to the ATPase A chain family. In terms of assembly, F-type ATPases have 2 components, CF(1) - the catalytic core - and CF(0) - the membrane proton channel. CF(1) has five subunits: alpha(3), beta(3), gamma(1), delta(1), epsilon(1). CF(0) has three main subunits: a(1), b(2) and c(9-12). The alpha and beta chains form an alternating ring which encloses part of the gamma chain. CF(1) is attached to CF(0) by a central stalk formed by the gamma and epsilon chains, while a peripheral stalk is formed by the delta and b chains.

Its subcellular location is the cell inner membrane. Its function is as follows. Key component of the proton channel; it plays a direct role in the translocation of protons across the membrane. In Pseudomonas putida (strain ATCC 47054 / DSM 6125 / CFBP 8728 / NCIMB 11950 / KT2440), this protein is ATP synthase subunit a.